The sequence spans 248 residues: Sugar fermentation stimulation protein homolog (248 aa).

The protein belongs to the SfsA family.

The sequence is that of Sugar fermentation stimulation protein homolog from Methylorubrum extorquens (strain CM4 / NCIMB 13688) (Methylobacterium extorquens).